Reading from the N-terminus, the 159-residue chain is Trafficking protein particle complex subunit 6A (159 aa).

Phosphoserine is present on serine 33.

The protein belongs to the TRAPP small subunits family. BET3 subfamily. As to quaternary structure, part of the multisubunit transport protein particle (TRAPP) complex. Heterodimer with TRAPPC3. The heterodimer TRAPPC3-TRAPPC6A interacts with TRAPPC2L. Interacts with TRAPPC2L. In terms of tissue distribution, ubiquitous, with lowest expression in skeletal muscle and brain and highest in kidney, liver and testis, as well as in cultured melanocytes.

The protein resides in the golgi apparatus. The protein localises to the cis-Golgi network. It localises to the endoplasmic reticulum. In terms of biological role, may play a role in vesicular transport during the biogenesis of melanosomes. In Mus musculus (Mouse), this protein is Trafficking protein particle complex subunit 6A.